The chain runs to 218 residues: C-type lectin domain family 2 member H (218 aa).

Residues 1-52 (MNAAKVETSSMGMLQRADLTAADCLQEGEMGKKIQGKCFRIISTVSPVKLYC) are Cytoplasmic-facing. A helical; Signal-anchor for type II membrane protein membrane pass occupies residues 53 to 73 (CYGVIMVLTVAVIALSVALSV). Over 74–218 (RNKIPAMEDR…SRVGSVPRHV (145 aa)) the chain is Extracellular. Cys90 and Cys101 are joined by a disulfide. The C-type lectin domain maps to 97-201 (FGSKCFYFSE…SYTHRKWICS (105 aa)). Asn110 carries an N-linked (GlcNAc...) asparagine glycan. Cysteines 118 and 200 form a disulfide.

Detected in ileum, liver, kidney and in IL2-activated natural killer cells.

The protein localises to the cell membrane. In terms of biological role, lectin-type cell surface receptor. This chain is C-type lectin domain family 2 member H (Clec2h), found in Mus musculus (Mouse).